The sequence spans 523 residues: Cytochrome P450 CYP82J17 (523 aa).

The helical transmembrane segment at F4–W24 threads the bilayer. C462 is a binding site for heme.

The protein belongs to the cytochrome P450 family. In terms of tissue distribution, mainly expressed in leaves and seed pods and, to a lower extent, in flowers and stems.

Its subcellular location is the membrane. It functions in the pathway steroid metabolism; cholesterol metabolism. Functionally, involved in the biosynthesis of spiroketal steroid and saponin natural products from cholesterol such as diosgenin and analogs (e.g. furostanol and spirostanol), plant defense compounds used as main precursors for the industrial production of steroid hormones. During the 5,6-spiroketalization of cholesterol, may catalyze the 27-monohydroxylation of furostanol-type steroid to an intermediate product that undergoes a stereospecific formation of the terminal heterocycle to yield diosgenin. The sequence is that of Cytochrome P450 CYP82J17 from Trigonella foenum-graecum (Fenugreek).